Here is a 101-residue protein sequence, read N- to C-terminus: Apolipoprotein C-II (101 aa).

The N-terminal stretch at 1-22 (MGTRFLLALFLVLLVLGFEVQG) is a signal peptide. The lipid binding stretch occupies residues 66-74 (AVDEKLRDM). Residues 78–101 (STAAVSTYAGIFTDQVLSMLRGEE) are lipoprotein lipase cofactor.

Belongs to the apolipoprotein C2 family. Proapolipoprotein C-II is synthesized as a sialic acid containing glycoprotein which is subsequently desialylated prior to its proteolytic processing. In terms of processing, proapolipoprotein C-II, the major form found in plasma undergoes proteolytic cleavage of its N-terminal hexapeptide to generate apolipoprotein C-II, which occurs as the minor form in plasma.

Its subcellular location is the secreted. In terms of biological role, component of chylomicrons, very low-density lipoproteins (VLDL), low-density lipoproteins (LDL), and high-density lipoproteins (HDL) in plasma. Plays an important role in lipoprotein metabolism as an activator of lipoprotein lipase. Both proapolipoprotein C-II and apolipoprotein C-II can activate lipoprotein lipase. The sequence is that of Apolipoprotein C-II (APOC2) from Saimiri boliviensis boliviensis (Bolivian squirrel monkey).